The primary structure comprises 286 residues: Shikimate dehydrogenase (NADP(+)) (286 aa).

Shikimate contacts are provided by residues 21 to 23 and T68; that span reads TLS. Catalysis depends on K72, which acts as the Proton acceptor. Position 84 (E84) interacts with NADP(+). Positions 93 and 108 each coordinate shikimate. NADP(+) is bound by residues 132 to 136 and L230; that span reads GNGGA. Shikimate is bound at residue Y232. Residue G253 participates in NADP(+) binding.

This sequence belongs to the shikimate dehydrogenase family. Homodimer.

The catalysed reaction is shikimate + NADP(+) = 3-dehydroshikimate + NADPH + H(+). Its pathway is metabolic intermediate biosynthesis; chorismate biosynthesis; chorismate from D-erythrose 4-phosphate and phosphoenolpyruvate: step 4/7. Involved in the biosynthesis of the chorismate, which leads to the biosynthesis of aromatic amino acids. Catalyzes the reversible NADPH linked reduction of 3-dehydroshikimate (DHSA) to yield shikimate (SA). The chain is Shikimate dehydrogenase (NADP(+)) from Microcystis aeruginosa (strain NIES-843 / IAM M-2473).